The sequence spans 458 residues: Argininosuccinate lyase (458 aa).

Belongs to the lyase 1 family. Argininosuccinate lyase subfamily.

It localises to the cytoplasm. The catalysed reaction is 2-(N(omega)-L-arginino)succinate = fumarate + L-arginine. The protein operates within amino-acid biosynthesis; L-arginine biosynthesis; L-arginine from L-ornithine and carbamoyl phosphate: step 3/3. The chain is Argininosuccinate lyase from Heliobacterium mobile (Heliobacillus mobilis).